The primary structure comprises 245 residues: Triosephosphate isomerase (245 aa).

Residue 9-11 (NWK) participates in substrate binding. Histidine 92 acts as the Electrophile in catalysis. The Proton acceptor role is filled by glutamate 164. Substrate is bound by residues glycine 170, serine 209, and 230–231 (GG).

Belongs to the triosephosphate isomerase family. In terms of assembly, homodimer.

It is found in the cytoplasm. The catalysed reaction is D-glyceraldehyde 3-phosphate = dihydroxyacetone phosphate. It functions in the pathway carbohydrate biosynthesis; gluconeogenesis. It participates in carbohydrate degradation; glycolysis; D-glyceraldehyde 3-phosphate from glycerone phosphate: step 1/1. In terms of biological role, involved in the gluconeogenesis. Catalyzes stereospecifically the conversion of dihydroxyacetone phosphate (DHAP) to D-glyceraldehyde-3-phosphate (G3P). The polypeptide is Triosephosphate isomerase (Cupriavidus necator (strain ATCC 17699 / DSM 428 / KCTC 22496 / NCIMB 10442 / H16 / Stanier 337) (Ralstonia eutropha)).